The chain runs to 310 residues: Aspartate carbamoyltransferase catalytic subunit (310 aa).

Residues Arg55 and Thr56 each contribute to the carbamoyl phosphate site. Lys83 contributes to the L-aspartate binding site. 3 residues coordinate carbamoyl phosphate: Arg105, His136, and Gln139. 2 residues coordinate L-aspartate: Arg169 and Arg223. Carbamoyl phosphate contacts are provided by Gly264 and Pro265.

This sequence belongs to the aspartate/ornithine carbamoyltransferase superfamily. ATCase family. In terms of assembly, heterododecamer (2C3:3R2) of six catalytic PyrB chains organized as two trimers (C3), and six regulatory PyrI chains organized as three dimers (R2).

The catalysed reaction is carbamoyl phosphate + L-aspartate = N-carbamoyl-L-aspartate + phosphate + H(+). Its pathway is pyrimidine metabolism; UMP biosynthesis via de novo pathway; (S)-dihydroorotate from bicarbonate: step 2/3. Catalyzes the condensation of carbamoyl phosphate and aspartate to form carbamoyl aspartate and inorganic phosphate, the committed step in the de novo pyrimidine nucleotide biosynthesis pathway. The sequence is that of Aspartate carbamoyltransferase catalytic subunit from Saccharopolyspora erythraea (strain ATCC 11635 / DSM 40517 / JCM 4748 / NBRC 13426 / NCIMB 8594 / NRRL 2338).